The following is a 303-amino-acid chain: Probable cell division protein WhiA (303 aa).

A DNA-binding region (H-T-H motif) is located at residues 272–303; that stretch reads SIQQIADSIEPPLTKSGVNHRLRKINKIADDL.

Belongs to the WhiA family.

Its function is as follows. Involved in cell division and chromosome segregation. The polypeptide is Probable cell division protein WhiA (Streptococcus thermophilus (strain ATCC BAA-250 / LMG 18311)).